We begin with the raw amino-acid sequence, 503 residues long: Asparagine--tRNA ligase (503 aa).

It belongs to the class-II aminoacyl-tRNA synthetase family. As to quaternary structure, homodimer.

The protein localises to the cytoplasm. The catalysed reaction is tRNA(Asn) + L-asparagine + ATP = L-asparaginyl-tRNA(Asn) + AMP + diphosphate + H(+). In Aster yellows witches'-broom phytoplasma (strain AYWB), this protein is Asparagine--tRNA ligase.